Here is a 228-residue protein sequence, read N- to C-terminus: Small ribosomal subunit protein uS10m (228 aa).

The N-terminal 17 residues, 1 to 17 (MKRYMFGTLPRVQPKRC), are a transit peptide targeting the mitochondrion.

Belongs to the universal ribosomal protein uS10 family. In terms of assembly, component of the mitochondrial small ribosomal subunit (mt-SSU). Mature yeast 74S mitochondrial ribosomes consist of a small (37S) and a large (54S) subunit. The 37S small subunit contains a 15S ribosomal RNA (15S mt-rRNA) and at least 32 different proteins. The 54S large subunit contains a 21S rRNA (21S mt-rRNA) and at least 45 different proteins.

The protein resides in the mitochondrion. Component of the mitochondrial ribosome (mitoribosome), a dedicated translation machinery responsible for the synthesis of mitochondrial genome-encoded proteins, including at least some of the essential transmembrane subunits of the mitochondrial respiratory chain. The mitoribosomes are attached to the mitochondrial inner membrane and translation products are cotranslationally integrated into the membrane. The sequence is that of Small ribosomal subunit protein uS10m (rsm10) from Schizosaccharomyces pombe (strain 972 / ATCC 24843) (Fission yeast).